Reading from the N-terminus, the 432-residue chain is Actin-related protein 4 (432 aa).

It belongs to the actin family. ARP4 subfamily. Component of the NuA4 histone acetyltransferase complex, of the INO80 chromatin remodeling complex, and of the SWR1 chromatin remodeling complex.

The protein resides in the nucleus. In terms of biological role, chromatin interaction component of the NuA4 histone acetyltransferase complex which is involved in transcriptional activation of selected genes principally by acetylation of nucleosomal histone H4 and H2A. The NuA4 complex is also involved in DNA repair. Is required for NuA4 complex integrity. Component of the SWR1 complex which mediates the ATP-dependent exchange of histone H2A for the H2A variant HZT1 leading to transcriptional regulation of selected genes by chromatin remodeling. Component of the INO80 complex which remodels chromatin by shifting nucleosomes and is involved in DNA repair. In Yarrowia lipolytica (strain CLIB 122 / E 150) (Yeast), this protein is Actin-related protein 4 (ARP4).